The following is a 233-amino-acid chain: Methylthioribulose-1-phosphate dehydratase (233 aa).

C91 contacts substrate. Positions 108 and 110 each coordinate Zn(2+). E137 functions as the Proton donor/acceptor in the catalytic mechanism. H194 contributes to the Zn(2+) binding site.

Belongs to the aldolase class II family. MtnB subfamily. The cofactor is Zn(2+).

It localises to the cytoplasm. The catalysed reaction is 5-(methylsulfanyl)-D-ribulose 1-phosphate = 5-methylsulfanyl-2,3-dioxopentyl phosphate + H2O. It functions in the pathway amino-acid biosynthesis; L-methionine biosynthesis via salvage pathway; L-methionine from S-methyl-5-thio-alpha-D-ribose 1-phosphate: step 2/6. Its function is as follows. Catalyzes the dehydration of methylthioribulose-1-phosphate (MTRu-1-P) into 2,3-diketo-5-methylthiopentyl-1-phosphate (DK-MTP-1-P). This Phaeosphaeria nodorum (strain SN15 / ATCC MYA-4574 / FGSC 10173) (Glume blotch fungus) protein is Methylthioribulose-1-phosphate dehydratase.